The sequence spans 1018 residues: Putative type I restriction enzyme MjaVIIIP endonuclease subunit (1018 aa).

This sequence belongs to the HsdR family. As to quaternary structure, the type I restriction/modification system is composed of three polypeptides R, M and S.

The catalysed reaction is Endonucleolytic cleavage of DNA to give random double-stranded fragments with terminal 5'-phosphates, ATP is simultaneously hydrolyzed.. Its function is as follows. The restriction (R) subunit of a type I restriction enzyme that recognizes 5'-GAYN(5)GTAA-3' and cleaves a random distance away. The R subunit is required for both endonuclease and ATPase activities but not for modification. After locating a non-methylated recognition site, the enzyme complex serves as a molecular motor that translocates DNA in an ATP-dependent manner until a collision occurs that triggers cleavage. This Methanocaldococcus jannaschii (strain ATCC 43067 / DSM 2661 / JAL-1 / JCM 10045 / NBRC 100440) (Methanococcus jannaschii) protein is Putative type I restriction enzyme MjaVIIIP endonuclease subunit.